The following is a 229-amino-acid chain: (S)-2-haloacid dehalogenase 2 (229 aa).

D10 serves as the catalytic Nucleophile. Residues 11-12 (LY), R41, and 118-119 (SN) contribute to the an (S)-2-haloacid site. Positions 175 to 180 (SSNAWD) are important for catalytic activity.

It belongs to the HAD-like hydrolase superfamily. S-2-haloalkanoic acid dehalogenase family.

The enzyme catalyses an (S)-2-haloacid + H2O = a (2R)-2-hydroxycarboxylate + a halide anion + H(+). It carries out the reaction (S)-2-chloropropanoate + H2O = (R)-lactate + chloride + H(+). In terms of biological role, catalyzes the hydrolytic dehalogenation of small (S)-2-haloalkanoic acids to yield the corresponding (R)-2-hydroxyalkanoic acids. Acts on acids of short chain lengths, C(2) to C(4), with inversion of configuration at C-2. Active with 2-halogenated carboxylic acids and converts only the S-isomer (or L-isomer) of 2-chloropropionic acid with inversion of configuration to produce R-lactate (or D-isomer). The chain is (S)-2-haloacid dehalogenase 2 from Pseudomonas sp. (strain CBS-3).